Reading from the N-terminus, the 700-residue chain is Putative ankyrin repeat protein FPV018 (700 aa).

11 ANK repeats span residues 29–59 (DRLL…VINM), 63–92 (NRLL…VING), 126–155 (RIRR…DLKM), 204–233 (MRRI…LADT), 236–265 (ALED…DINS), 270–299 (NSHT…DPDI), 301–332 (DIYS…RIRC), 395–424 (CNMY…DVNV), 428–457 (YGKT…NVNE), 461–490 (YGIT…DVNQ), and 494–523 (DKNT…DMCF).

This Fowlpox virus (strain NVSL) (FPV) protein is Putative ankyrin repeat protein FPV018.